Consider the following 224-residue polypeptide: UPF0758 protein VFMJ11_0123 (224 aa).

An MPN domain is found at 102–224; that stretch reads ALTSPEHTKR…IVSFAERGWI (123 aa). Zn(2+) contacts are provided by His173, His175, and Asp186. The short motif at 173-186 is the JAMM motif element; that stretch reads HNHPSGVAEPSQAD.

This sequence belongs to the UPF0758 family.

This chain is UPF0758 protein VFMJ11_0123, found in Aliivibrio fischeri (strain MJ11) (Vibrio fischeri).